A 228-amino-acid polypeptide reads, in one-letter code: Cytochrome c oxidase subunit 2 (228 aa).

Topologically, residues 1 to 14 (MAYPLQLGLQDASS) are mitochondrial intermembrane. A helical membrane pass occupies residues 15-45 (PIMEELTNFHDHTLMIVFLISSLVLYLISLM). Topologically, residues 46-59 (LTTKLIHTSTMDAQ) are mitochondrial matrix. The helical transmembrane segment at 60–87 (EVETIWTILPAIILILIALPSLRILYMM) threads the bilayer. Residues 88-228 (DEINNPVLTV…FENWSVSMTQ (141 aa)) are Mitochondrial intermembrane-facing. Positions 161, 196, 198, 200, 204, and 207 each coordinate Cu cation. Residue Glu198 participates in Mg(2+) binding.

This sequence belongs to the cytochrome c oxidase subunit 2 family. Component of the cytochrome c oxidase (complex IV, CIV), a multisubunit enzyme composed of 14 subunits. The complex is composed of a catalytic core of 3 subunits MT-CO1, MT-CO2 and MT-CO3, encoded in the mitochondrial DNA, and 11 supernumerary subunits COX4I, COX5A, COX5B, COX6A, COX6B, COX6C, COX7A, COX7B, COX7C, COX8 and NDUFA4, which are encoded in the nuclear genome. The complex exists as a monomer or a dimer and forms supercomplexes (SCs) in the inner mitochondrial membrane with NADH-ubiquinone oxidoreductase (complex I, CI) and ubiquinol-cytochrome c oxidoreductase (cytochrome b-c1 complex, complex III, CIII), resulting in different assemblies (supercomplex SCI(1)III(2)IV(1) and megacomplex MCI(2)III(2)IV(2)). Found in a complex with TMEM177, COA6, COX18, COX20, SCO1 and SCO2. Interacts with TMEM177 in a COX20-dependent manner. Interacts with COX20. Interacts with COX16. Cu cation serves as cofactor.

It is found in the mitochondrion inner membrane. It catalyses the reaction 4 Fe(II)-[cytochrome c] + O2 + 8 H(+)(in) = 4 Fe(III)-[cytochrome c] + 2 H2O + 4 H(+)(out). Component of the cytochrome c oxidase, the last enzyme in the mitochondrial electron transport chain which drives oxidative phosphorylation. The respiratory chain contains 3 multisubunit complexes succinate dehydrogenase (complex II, CII), ubiquinol-cytochrome c oxidoreductase (cytochrome b-c1 complex, complex III, CIII) and cytochrome c oxidase (complex IV, CIV), that cooperate to transfer electrons derived from NADH and succinate to molecular oxygen, creating an electrochemical gradient over the inner membrane that drives transmembrane transport and the ATP synthase. Cytochrome c oxidase is the component of the respiratory chain that catalyzes the reduction of oxygen to water. Electrons originating from reduced cytochrome c in the intermembrane space (IMS) are transferred via the dinuclear copper A center (CU(A)) of subunit 2 and heme A of subunit 1 to the active site in subunit 1, a binuclear center (BNC) formed by heme A3 and copper B (CU(B)). The BNC reduces molecular oxygen to 2 water molecules using 4 electrons from cytochrome c in the IMS and 4 protons from the mitochondrial matrix. This Meriones shawi (Shaw's jird) protein is Cytochrome c oxidase subunit 2 (MT-CO2).